The following is a 541-amino-acid chain: Chaperonin GroEL 1 (541 aa).

ATP is bound by residues 29 to 32 (TLGP), 86 to 90 (DGTTT), glycine 413, 478 to 480 (NAA), and aspartate 494. Positions 520 to 541 (VVEKPAEAEDDGHGHGHGHHHH) are disordered. Residues 523-533 (KPAEAEDDGHG) are compositionally biased toward basic and acidic residues.

Belongs to the chaperonin (HSP60) family. In terms of assembly, forms a cylinder of 14 subunits composed of two heptameric rings stacked back-to-back. Interacts with the co-chaperonin GroES.

It is found in the cytoplasm. The catalysed reaction is ATP + H2O + a folded polypeptide = ADP + phosphate + an unfolded polypeptide.. Together with its co-chaperonin GroES, plays an essential role in assisting protein folding. The GroEL-GroES system forms a nano-cage that allows encapsulation of the non-native substrate proteins and provides a physical environment optimized to promote and accelerate protein folding. The polypeptide is Chaperonin GroEL 1 (Mycolicibacterium gilvum (strain PYR-GCK) (Mycobacterium gilvum (strain PYR-GCK))).